The following is a 113-amino-acid chain: MNSTSLFLFSLLLLLVTGAIGKKTKEKFLQSEETVRESFSMGSRGHMSRSSEPEVFVRPQDSIGDEASEEMSSSSSSRRRSKIISSSSDGSNMEGESSYSKRKKSRFSQDALE.

An N-terminal signal peptide occupies residues M1–G21. The disordered stretch occupies residues S31–E113. Composition is skewed to low complexity over residues S38 to S50 and I83 to S98.

Belongs to the SVP2/SVP5/SVP6 family. As to expression, testis.

Its subcellular location is the secreted. It is found in the extracellular space. The chain is Seminal vesicle secretory protein 4 (Svs4) from Mus musculus (Mouse).